Here is a 104-residue protein sequence, read N- to C-terminus: uncharacterized protein (104 aa).

A helical transmembrane segment spans residues 81-97; sequence CLLMLPCISVVMSISSV.

It is found in the cell membrane. This is an uncharacterized protein from Bacillus subtilis (strain 168).